Reading from the N-terminus, the 635-residue chain is Threonine--tRNA ligase (635 aa).

A TGS domain is found at 1 to 61; that stretch reads MITVRLPDGS…EKDSDLAIIT (61 aa). The interval 242–533 is catalytic; that stretch reads DHRKLGKQLD…LIEHYAGALP (292 aa). Zn(2+) is bound by residues Cys-333, His-384, and His-510.

It belongs to the class-II aminoacyl-tRNA synthetase family. Homodimer. Requires Zn(2+) as cofactor.

The protein localises to the cytoplasm. The enzyme catalyses tRNA(Thr) + L-threonine + ATP = L-threonyl-tRNA(Thr) + AMP + diphosphate + H(+). Functionally, catalyzes the attachment of threonine to tRNA(Thr) in a two-step reaction: L-threonine is first activated by ATP to form Thr-AMP and then transferred to the acceptor end of tRNA(Thr). Also edits incorrectly charged L-seryl-tRNA(Thr). The polypeptide is Threonine--tRNA ligase (Janthinobacterium sp. (strain Marseille) (Minibacterium massiliensis)).